The following is a 504-amino-acid chain: Catalase (504 aa).

A disordered region spans residues 1–25; sequence MSKQDGKLTGLFGAPVSDRENSMTA. Active-site residues include His56 and Asn129. Residue Tyr339 coordinates heme.

The protein belongs to the catalase family. In terms of assembly, homodimer. Heme is required as a cofactor.

The enzyme catalyses 2 H2O2 = O2 + 2 H2O. Decomposes hydrogen peroxide into water and oxygen; serves to protect cells from the toxic effects of hydrogen peroxide. The polypeptide is Catalase (katA) (Staphylococcus epidermidis (strain ATCC 35984 / DSM 28319 / BCRC 17069 / CCUG 31568 / BM 3577 / RP62A)).